The sequence spans 133 residues: Vascular endothelial growth factor homolog (133 aa).

The N-terminal stretch at 1-20 (MKLLVGILVAVCLHQYLLNA) is a signal peptide. 3 cysteine pairs are disulfide-bonded: Cys36–Cys78, Cys67–Cys112, and Cys71–Cys114. A glycan (N-linked (GlcNAc...) asparagine; by host) is linked at Asn85.

It belongs to the PDGF/VEGF growth factor family. As to quaternary structure, homodimer; disulfide-linked.

The protein resides in the secreted. In terms of biological role, induces endothelial proliferation. This is Vascular endothelial growth factor homolog from Orf virus (strain NZ2) (OV NZ-2).